Consider the following 211-residue polypeptide: 2,3-bisphosphoglycerate-dependent phosphoglycerate mutase (211 aa).

Substrate contacts are provided by residues 9–16, 22–23, arginine 61, 88–91, lysine 99, 115–116, and 159–160; these read RHGQSDWN, TG, ERDY, RR, and GN. Histidine 10 serves as the catalytic Tele-phosphohistidine intermediate. Glutamate 88 functions as the Proton donor/acceptor in the catalytic mechanism.

Belongs to the phosphoglycerate mutase family. BPG-dependent PGAM subfamily. Homodimer.

The catalysed reaction is (2R)-2-phosphoglycerate = (2R)-3-phosphoglycerate. The protein operates within carbohydrate degradation; glycolysis; pyruvate from D-glyceraldehyde 3-phosphate: step 3/5. Its function is as follows. Catalyzes the interconversion of 2-phosphoglycerate and 3-phosphoglycerate. This chain is 2,3-bisphosphoglycerate-dependent phosphoglycerate mutase, found in Rhizobium rhizogenes (strain K84 / ATCC BAA-868) (Agrobacterium radiobacter).